A 155-amino-acid polypeptide reads, in one-letter code: D-aminoacyl-tRNA deacylase (155 aa).

The Gly-cisPro motif, important for rejection of L-amino acids motif lies at 147 to 148 (GP).

Belongs to the DTD family. Homodimer.

The protein localises to the cytoplasm. It catalyses the reaction glycyl-tRNA(Ala) + H2O = tRNA(Ala) + glycine + H(+). The enzyme catalyses a D-aminoacyl-tRNA + H2O = a tRNA + a D-alpha-amino acid + H(+). In terms of biological role, an aminoacyl-tRNA editing enzyme that deacylates mischarged D-aminoacyl-tRNAs. Also deacylates mischarged glycyl-tRNA(Ala), protecting cells against glycine mischarging by AlaRS. Acts via tRNA-based rather than protein-based catalysis; rejects L-amino acids rather than detecting D-amino acids in the active site. By recycling D-aminoacyl-tRNA to D-amino acids and free tRNA molecules, this enzyme counteracts the toxicity associated with the formation of D-aminoacyl-tRNA entities in vivo and helps enforce protein L-homochirality. In Corynebacterium urealyticum (strain ATCC 43042 / DSM 7109), this protein is D-aminoacyl-tRNA deacylase.